A 154-amino-acid polypeptide reads, in one-letter code: Myoglobin (154 aa).

One can recognise a Globin domain in the interval 2–148 (GLSDGEWQLV…FRNDMAAKYK (147 aa)). Position 4 is a phosphoserine (serine 4). Position 65 (histidine 65) interacts with nitrite. An O2-binding site is contributed by histidine 65. A Phosphothreonine modification is found at threonine 68. Histidine 94 serves as a coordination point for heme b.

Belongs to the globin family. Monomeric.

It localises to the cytoplasm. The protein localises to the sarcoplasm. It carries out the reaction Fe(III)-heme b-[protein] + nitric oxide + H2O = Fe(II)-heme b-[protein] + nitrite + 2 H(+). The enzyme catalyses H2O2 + AH2 = A + 2 H2O. In terms of biological role, monomeric heme protein which primary function is to store oxygen and facilitate its diffusion within muscle tissues. Reversibly binds oxygen through a pentacoordinated heme iron and enables its timely and efficient release as needed during periods of heightened demand. Depending on the oxidative conditions of tissues and cells, and in addition to its ability to bind oxygen, it also has a nitrite reductase activity whereby it regulates the production of bioactive nitric oxide. Under stress conditions, like hypoxia and anoxia, it also protects cells against reactive oxygen species thanks to its pseudoperoxidase activity. The sequence is that of Myoglobin (MB) from Erythrocebus patas (Red guenon).